The sequence spans 301 residues: Immediate early response gene 5-like protein (301 aa).

Belongs to the IER family.

The chain is Immediate early response gene 5-like protein (ier5l) from Danio rerio (Zebrafish).